Reading from the N-terminus, the 231-residue chain is Probable glutathione S-transferase GSTU1 (231 aa).

The region spanning 5–84 is the GST N-terminal domain; it reads KELVLLDFWV…YLDDAFPGTP (80 aa). Residues serine 15, lysine 42, isoleucine 56, and 68–69 each bind glutathione; that span reads ES. In terms of domain architecture, GST C-terminal spans 97-220; sequence AAYARATARF…LPSPEKVYDF (124 aa).

The protein belongs to the GST superfamily. Tau family.

It carries out the reaction RX + glutathione = an S-substituted glutathione + a halide anion + H(+). Conjugation of reduced glutathione to a wide number of exogenous and endogenous hydrophobic electrophiles. In Oryza sativa subsp. japonica (Rice), this protein is Probable glutathione S-transferase GSTU1 (GSTU1).